Consider the following 187-residue polypeptide: T-cell receptor-associated transmembrane adapter 1 (187 aa).

Residues M1–C7 are Extracellular-facing. The chain crosses the membrane as a helical; Signal-anchor for type III membrane protein span at residues P8 to F28. The Cytoplasmic portion of the chain corresponds to N29–I187. S46 bears the Phosphoserine mark. Position 80 is a phosphotyrosine (Y80). The interval Y80–M83 is interaction with PIK3R1. The disordered stretch occupies residues S117 to D138.

Homodimer; disulfide-linked. Interacts with CD3Z. When phosphorylated, interacts with PIK3R1. Phosphorylated on tyrosines upon TCR activation. In terms of tissue distribution, present in T-cells (at protein level).

It is found in the cell membrane. Stabilizes the TCR (T-cell antigen receptor)/CD3 complex at the surface of T-cells. This is T-cell receptor-associated transmembrane adapter 1 (Trat1) from Mus musculus (Mouse).